The primary structure comprises 212 residues: External core antigen (212 aa).

The first 19 residues, 1 to 19, serve as a signal peptide directing secretion; it reads MQLFHLCLIISCSCPTVQA. Positions 25-27 are HBEAG; that stretch reads GWL. The disordered stretch occupies residues 165 to 212; the sequence is NAPILSTLPETTVVRRRGRSPRRRTPSPRRRRSQSPRRRRSQSPASQC. The segment covering 178–205 has biased composition (basic residues); that stretch reads VRRRGRSPRRRTPSPRRRRSQSPRRRRS. The 1; half-length repeat unit spans residues 184–190; sequence SPRRRTP. The 3 X 8 AA repeats of S-P-R-R-R-R-S-Q stretch occupies residues 184 to 206; the sequence is SPRRRTPSPRRRRSQSPRRRRSQ. The propeptide occupies 184 to 212; that stretch reads SPRRRTPSPRRRRSQSPRRRRSQSPASQC. Repeat copies occupy residues 191–198 and 199–206.

The protein belongs to the orthohepadnavirus precore antigen family. As to quaternary structure, homodimerizes. Phosphorylated. Post-translationally, cleaved by host furin.

The protein resides in the secreted. The protein localises to the host nucleus. May regulate immune response to the intracellular capsid in acting as a T-cell tolerogen, by having an immunoregulatory effect which prevents destruction of infected cells by cytotoxic T-cells. This immune regulation may predispose to chronicity during perinatal infections and prevent severe liver injury during adult infections. The protein is External core antigen of Gibbon hepatitis B virus subtype ayw3q (isolate Hope) (HBVgbn).